The sequence spans 233 residues: LAIPPFNYPVNLAVSKLAPALMAGNTVVLKPPSQGVVAGIHMIKCFQAAGLPAGTVNLVTGKGSEIGDFLTTHPAVNCISFTGGDTGIAISRKAGMVPLQMELGGKDACIVCSDADLDLAATHIIKGGFSYSGQRCTAVKVVLVMQDIADELVRKVHAGVQKLKVGRPEDNADITAVVSEGSANFIQGLVEDAKAKGATFLTDWKREGNLLWPVLLDNVTADMRIAWEEPFGP.

7–8 contacts substrate; it reads NY. NADP(+) contacts are provided by K30 and S33. Position 83 to 87 (83 to 87) interacts with NAD(+); it reads GGDTG. E102 functions as the Proton acceptor in the catalytic mechanism. 135-137 is a binding site for substrate; sequence RCT. The active-site Nucleophile is C136. NADP(+)-binding residues include E180 and E229.

The protein belongs to the aldehyde dehydrogenase family.

It is found in the cytoplasm. The catalysed reaction is D-glyceraldehyde 3-phosphate + NADP(+) + H2O = (2R)-3-phosphoglycerate + NADPH + 2 H(+). Its function is as follows. Important as a means of generating NADPH for biosynthetic reactions. In Scenedesmus vacuolatus (Green alga), this protein is NADP-dependent glyceraldehyde-3-phosphate dehydrogenase (GapN).